The primary structure comprises 147 residues: Large ribosomal subunit protein uL13 (147 aa).

The protein belongs to the universal ribosomal protein uL13 family. In terms of assembly, part of the 50S ribosomal subunit.

Its function is as follows. This protein is one of the early assembly proteins of the 50S ribosomal subunit, although it is not seen to bind rRNA by itself. It is important during the early stages of 50S assembly. In Mycobacteroides abscessus (strain ATCC 19977 / DSM 44196 / CCUG 20993 / CIP 104536 / JCM 13569 / NCTC 13031 / TMC 1543 / L948) (Mycobacterium abscessus), this protein is Large ribosomal subunit protein uL13.